The sequence spans 426 residues: Histidinol dehydrogenase (426 aa).

NAD(+) is bound by residues Y125, Q187, and N210. Substrate is bound by residues S233, Q255, and H258. Positions 255 and 258 each coordinate Zn(2+). Residues E323 and H324 each act as proton acceptor in the active site. Substrate is bound by residues H324, D357, E411, and H416. A Zn(2+)-binding site is contributed by D357. Residue H416 participates in Zn(2+) binding.

It belongs to the histidinol dehydrogenase family. Requires Zn(2+) as cofactor.

It carries out the reaction L-histidinol + 2 NAD(+) + H2O = L-histidine + 2 NADH + 3 H(+). It functions in the pathway amino-acid biosynthesis; L-histidine biosynthesis; L-histidine from 5-phospho-alpha-D-ribose 1-diphosphate: step 9/9. Its function is as follows. Catalyzes the sequential NAD-dependent oxidations of L-histidinol to L-histidinaldehyde and then to L-histidine. In Methanothermobacter thermautotrophicus (strain ATCC 29096 / DSM 1053 / JCM 10044 / NBRC 100330 / Delta H) (Methanobacterium thermoautotrophicum), this protein is Histidinol dehydrogenase (hisD).